A 179-amino-acid chain; its full sequence is Tetratricopeptide repeat protein 36 (179 aa).

TPR repeat units lie at residues S43 to N76, S78 to K110, and C115 to F148.

It belongs to the TTC36 family.

The chain is Tetratricopeptide repeat protein 36 from Caenorhabditis elegans.